The primary structure comprises 185 residues: Peptide deformylase (185 aa).

C112 and H155 together coordinate Fe cation. E156 is an active-site residue. Residue H159 participates in Fe cation binding.

This sequence belongs to the polypeptide deformylase family. Requires Fe(2+) as cofactor.

It carries out the reaction N-terminal N-formyl-L-methionyl-[peptide] + H2O = N-terminal L-methionyl-[peptide] + formate. Removes the formyl group from the N-terminal Met of newly synthesized proteins. Requires at least a dipeptide for an efficient rate of reaction. N-terminal L-methionine is a prerequisite for activity but the enzyme has broad specificity at other positions. The sequence is that of Peptide deformylase from Latilactobacillus sakei subsp. sakei (strain 23K) (Lactobacillus sakei subsp. sakei).